A 184-amino-acid chain; its full sequence is NADH dehydrogenase [ubiquinone] 1 alpha subcomplex assembly factor 3 (184 aa).

This sequence belongs to the NDUFAF3 family. As to quaternary structure, interacts with NDUFAF4, NDUFS2 and NDUFS3.

It localises to the nucleus. The protein localises to the mitochondrion inner membrane. Essential factor for the assembly of mitochondrial NADH:ubiquinone oxidoreductase complex (complex I). The sequence is that of NADH dehydrogenase [ubiquinone] 1 alpha subcomplex assembly factor 3 (NDUFAF3) from Homo sapiens (Human).